A 557-amino-acid chain; its full sequence is Organic cation/carnitine transporter 2 (557 aa).

Topologically, residues 1–20 are cytoplasmic; the sequence is MRDYDEVTAFLGEWGPFQRL. A helical membrane pass occupies residues 21-41; that stretch reads IFFLLSASIIPNGFNGMSIVF. Residues 42 to 142 are Extracellular-facing; the sequence is LAGTPEHRCL…DLVCKDDWKA (101 aa). N-linked (GlcNAc...) asparagine glycans are attached at residues Asn57, Asn64, and Asn91. The chain crosses the membrane as a helical span at residues 143 to 163; the sequence is PLTTSLFFVGVLMGSFISGQL. Residues 164–172 lie on the Cytoplasmic side of the membrane; sequence SDRFGRKNV. The helical transmembrane segment at 173–193 threads the bilayer; that stretch reads LFLTMGMQTGFSFLQLFSVNF. Residues 194 to 197 are Extracellular-facing; the sequence is EMFT. The chain crosses the membrane as a helical span at residues 198–218; it reads VLFVLVGMGQISNYVAAFVLG. 218–225 lines the ATP pocket; the sequence is GTEILSKS. At 219–232 the chain is on the cytoplasmic side; the sequence is TEILSKSIRIIFAT. A helical membrane pass occupies residues 233 to 253; sequence LGVCIFYAFGFMVLPLFAYFI. Over 254–257 the chain is Extracellular; sequence RDWR. A helical transmembrane segment spans residues 258 to 278; the sequence is MLLLALTVPGVLCGALWWFIP. Topologically, residues 279–341 are cytoplasmic; that stretch reads ESPRWLISQG…YDLVRTRNIR (63 aa). Residues 342–362 form a helical membrane-spanning segment; that stretch reads IITIMSIILWLTISVGYFGLS. At 363–373 the chain is on the extracellular side; sequence LDTPNLHGDIY. Residues 374-394 form a helical membrane-spanning segment; it reads VNCFLLAAVEVPAYVLAWLLL. Residues 395 to 406 are Cytoplasmic-facing; it reads QHLPRRYSISAA. The chain crosses the membrane as a helical span at residues 407 to 427; it reads LFLGGSVLLFIQLVPSELFYL. Topologically, residues 428–430 are extracellular; the sequence is STA. The chain crosses the membrane as a helical span at residues 431–451; that stretch reads LVMVGKFGITSAYSMVYVYTA. Over 452 to 462 the chain is Cytoplasmic; that stretch reads ELYPTVVRNMG. A helical transmembrane segment spans residues 463 to 483; sequence VGVSSTASRLGSILSPYFVYL. Residues 484-488 lie on the Extracellular side of the membrane; sequence GAYDR. Phosphotyrosine is present on Tyr486. A helical transmembrane segment spans residues 489–509; that stretch reads FLPYILMGSLTILTAILTLFF. Residues 510–557 lie on the Cytoplasmic side of the membrane; sequence PESFGAPLPDTIDQMLRVKGIKQWQIQSQTRTQKDGGESPTVLKSTAF. Residues 537 to 557 are disordered; sequence SQTRTQKDGGESPTVLKSTAF. Ser548 carries the post-translational modification Phosphoserine. A Phosphothreonine modification is found at Thr550.

The protein belongs to the major facilitator (TC 2.A.1) superfamily. Organic cation transporter (TC 2.A.1.19) family. As to quaternary structure, interacts with PDZK1. Expressed in the proximal and distal tubules and in the glomeruli in the kidney, in the myocardium, valves, and arterioles in the heart, in the labyrinthine layer of the placenta, and in the cortex, hippocampus, and cerebellum in the brain. Expressed in Sertoli cells in testis.

The protein localises to the cell membrane. The protein resides in the apical cell membrane. It localises to the basal cell membrane. It carries out the reaction (R)-carnitine(out) + Na(+)(out) = (R)-carnitine(in) + Na(+)(in). The enzyme catalyses O-acetyl-(R)-carnitine(out) + Na(+)(out) = O-acetyl-(R)-carnitine(in) + Na(+)(in). The catalysed reaction is O-propanoyl-(R)-carnitine(out) + Na(+)(out) = O-propanoyl-(R)-carnitine(in) + Na(+)(in). It catalyses the reaction glycine betaine(out) + Na(+)(out) = glycine betaine(in) + Na(+)(in). It carries out the reaction glycine betaine(out) + (R)-carnitine(in) = glycine betaine(in) + (R)-carnitine(out). The enzyme catalyses O-butanoyl-(R)-carnitine(out) + Na(+)(out) = O-butanoyl-(R)-carnitine(in) + Na(+)(in). The catalysed reaction is (S)-carnitine(out) + Na(+)(out) = (S)-carnitine(in) + Na(+)(in). It catalyses the reaction an O-acyl-(R)-carnitine(out) + Na(+)(out) = an O-acyl-(R)-carnitine(in) + Na(+)(in). It carries out the reaction L-glutamyl-L-arginyl-glycyl-L-methionyl-L-threonine(out) + Na(+)(out) = L-glutamyl-L-arginyl-glycyl-L-methionyl-L-threonine(in) + Na(+)(in). The enzyme catalyses N,N-dimethylglycine(out) + Na(+)(out) = N,N-dimethylglycine(in) + Na(+)(in). With respect to regulation, inhibited by emetine, quinidine and verapamil. The IC(50) of emetine is 4.2 uM. Not inhibited by valproic acid. Transport of (R)-carnitine is stimulated by cholesterol in the plasma membrane. Sodium-ion dependent, high affinity carnitine transporter. Involved in the active cellular uptake of carnitine. Transports one sodium ion with one molecule of carnitine. Also transports organic cations such as tetraethylammonium (TEA) without the involvement of sodium. Also relative uptake activity ratio of carnitine to TEA is 11.3. May also contribute to regulate the transport of organic compounds in testis across the blood-testis-barrier. The chain is Organic cation/carnitine transporter 2 (Slc22a5) from Rattus norvegicus (Rat).